A 168-amino-acid chain; its full sequence is tRNA-splicing endonuclease (168 aa).

Catalysis depends on residues Y107, H114, and K145.

This sequence belongs to the tRNA-intron endonuclease family. Archaeal short subfamily. As to quaternary structure, homotetramer; although the tetramer contains four active sites, only two participate in the cleavage. Therefore, it should be considered as a dimer of dimers.

The enzyme catalyses pretRNA = a 3'-half-tRNA molecule with a 5'-OH end + a 5'-half-tRNA molecule with a 2',3'-cyclic phosphate end + an intron with a 2',3'-cyclic phosphate and a 5'-hydroxyl terminus.. Functionally, endonuclease that removes tRNA introns. Cleaves pre-tRNA at the 5'- and 3'-splice sites to release the intron. The products are an intron and two tRNA half-molecules bearing 2',3' cyclic phosphate and 5'-OH termini. Recognizes a pseudosymmetric substrate in which 2 bulged loops of 3 bases are separated by a stem of 4 bp. The chain is tRNA-splicing endonuclease from Thermococcus kodakarensis (strain ATCC BAA-918 / JCM 12380 / KOD1) (Pyrococcus kodakaraensis (strain KOD1)).